The chain runs to 371 residues: Glutamate 5-kinase (371 aa).

K10 lines the ATP pocket. S50, D137, and N149 together coordinate substrate. ATP-binding positions include 169 to 170 and 208 to 214; these read SD and TGGMYTK. The 79-residue stretch at 274–352 folds into the PUA domain; that stretch reads QGKVYIDDGA…EEIKNILGED (79 aa).

The protein belongs to the glutamate 5-kinase family.

It localises to the cytoplasm. The enzyme catalyses L-glutamate + ATP = L-glutamyl 5-phosphate + ADP. It participates in amino-acid biosynthesis; L-proline biosynthesis; L-glutamate 5-semialdehyde from L-glutamate: step 1/2. Functionally, catalyzes the transfer of a phosphate group to glutamate to form L-glutamate 5-phosphate. The sequence is that of Glutamate 5-kinase from Dictyoglomus thermophilum (strain ATCC 35947 / DSM 3960 / H-6-12).